A 41-amino-acid polypeptide reads, in one-letter code: Photosystem I reaction center subunit IX (41 aa).

A helical transmembrane segment spans residues 7–27 (YLSTAPVVAFAWLTFTAGFII).

It belongs to the PsaJ family.

It is found in the plastid. The protein localises to the chloroplast thylakoid membrane. May help in the organization of the PsaE and PsaF subunits. The chain is Photosystem I reaction center subunit IX from Stigeoclonium helveticum (Green alga).